A 56-amino-acid polypeptide reads, in one-letter code: Small ribosomal subunit protein uS14 (56 aa).

Zn(2+) contacts are provided by cysteine 21, cysteine 24, cysteine 39, and cysteine 42.

Belongs to the universal ribosomal protein uS14 family. Zinc-binding uS14 subfamily. As to quaternary structure, part of the 30S ribosomal subunit. It depends on Zn(2+) as a cofactor.

Binds 16S rRNA, required for the assembly of 30S particles. In Pyrococcus furiosus (strain ATCC 43587 / DSM 3638 / JCM 8422 / Vc1), this protein is Small ribosomal subunit protein uS14.